A 157-amino-acid chain; its full sequence is Large ribosomal subunit protein uL22 (157 aa).

It belongs to the universal ribosomal protein uL22 family. In terms of assembly, part of the 50S ribosomal subunit.

In terms of biological role, this protein binds specifically to 23S rRNA. It makes multiple contacts with different domains of the 23S rRNA in the assembled 50S subunit and ribosome. Functionally, the globular domain of the protein is located near the polypeptide exit tunnel on the outside of the subunit, while an extended beta-hairpin is found that lines the wall of the exit tunnel in the center of the 70S ribosome. The protein is Large ribosomal subunit protein uL22 of Staphylothermus marinus (strain ATCC 43588 / DSM 3639 / JCM 9404 / F1).